Reading from the N-terminus, the 173-residue chain is Bifunctional protein PyrR (173 aa).

Residues 94-106 (VILIDDVLYTGRT) carry the PRPP-binding motif.

The protein belongs to the purine/pyrimidine phosphoribosyltransferase family. PyrR subfamily. Homodimer and homohexamer; in equilibrium.

It catalyses the reaction UMP + diphosphate = 5-phospho-alpha-D-ribose 1-diphosphate + uracil. Its function is as follows. Regulates transcriptional attenuation of the pyrimidine nucleotide (pyr) operon by binding in a uridine-dependent manner to specific sites on pyr mRNA. This disrupts an antiterminator hairpin in the RNA and favors formation of a downstream transcription terminator, leading to a reduced expression of downstream genes. In terms of biological role, also displays a weak uracil phosphoribosyltransferase activity which is not physiologically significant. The sequence is that of Bifunctional protein PyrR from Streptococcus gordonii (strain Challis / ATCC 35105 / BCRC 15272 / CH1 / DL1 / V288).